Here is a 295-residue protein sequence, read N- to C-terminus: Ribosomal protein L11 methyltransferase (295 aa).

S-adenosyl-L-methionine contacts are provided by Thr150, Gly171, Asp193, and Asn232.

It belongs to the methyltransferase superfamily. PrmA family.

It localises to the cytoplasm. It catalyses the reaction L-lysyl-[protein] + 3 S-adenosyl-L-methionine = N(6),N(6),N(6)-trimethyl-L-lysyl-[protein] + 3 S-adenosyl-L-homocysteine + 3 H(+). In terms of biological role, methylates ribosomal protein L11. The polypeptide is Ribosomal protein L11 methyltransferase (Neisseria meningitidis serogroup A / serotype 4A (strain DSM 15465 / Z2491)).